A 160-amino-acid polypeptide reads, in one-letter code: Ribosomal RNA large subunit methyltransferase H (160 aa).

S-adenosyl-L-methionine contacts are provided by residues L76, G108, and 127–132 (LGKMTW).

It belongs to the RNA methyltransferase RlmH family. Homodimer.

It localises to the cytoplasm. The enzyme catalyses pseudouridine(1915) in 23S rRNA + S-adenosyl-L-methionine = N(3)-methylpseudouridine(1915) in 23S rRNA + S-adenosyl-L-homocysteine + H(+). In terms of biological role, specifically methylates the pseudouridine at position 1915 (m3Psi1915) in 23S rRNA. This Sinorhizobium medicae (strain WSM419) (Ensifer medicae) protein is Ribosomal RNA large subunit methyltransferase H.